Reading from the N-terminus, the 296-residue chain is MTESFQKLEKIGEGTYGVVYKARERNTNRVVALKKIRLENENEGIPATTIREILLLKNLKHSTIVELSDVIYNNNKMYLVFEYVELDLRRYLDRMSDEGRLVEEGFVRKMSQQLLTAMEYCHSRNIFHRDLKPQNILVDPKENIKLADFGLGRAAGIPLRTYTTEVVTLWYRPPELLLGCKYYDASVDVWSAACIMAEVVLMRPFFPGDSEIDQLFRIFKVLGTPNNSRWSNVENFPNYKVEFPVWDPVDLKTIFRGDPDFVDLISKMLEYDPKMRMTAKNGLSHKYFEGMPLIME.

In terms of domain architecture, Protein kinase spans phenylalanine 5–phenylalanine 288. ATP is bound by residues isoleucine 11–valine 19 and lysine 34. The Proton acceptor role is filled by aspartate 130.

Belongs to the protein kinase superfamily. CMGC Ser/Thr protein kinase family. CDC2/CDKX subfamily.

The protein resides in the nucleus. The enzyme catalyses L-seryl-[protein] + ATP = O-phospho-L-seryl-[protein] + ADP + H(+). It carries out the reaction L-threonyl-[protein] + ATP = O-phospho-L-threonyl-[protein] + ADP + H(+). In terms of biological role, cyclin-dependent kinase that acts as a master regulator of the mitotic and meiotic cell cycles. This is Cyclin-dependent kinase 1 from Encephalitozoon cuniculi (strain GB-M1) (Microsporidian parasite).